Consider the following 581-residue polypeptide: Nicotinic acid-CoA ligase pyr1 (581 aa).

Residue 204–215 participates in AMP binding; the sequence is MFLTSGTSGLPK. The segment at 477–555 is AMP-binding; the sequence is EIEGILLKDP…DEIPRTGIGK (79 aa).

This sequence belongs to the ATP-dependent AMP-binding enzyme family.

The catalysed reaction is nicotinate + ATP + CoA = nicotinyl-CoA + AMP + diphosphate. Its pathway is secondary metabolite biosynthesis; terpenoid biosynthesis. Functionally, nicotinic acid-CoA ligase; part of the gene cluster that mediates the biosynthesis of pyripyropene A, a specific human acyl-coenzyme A:cholesterol acyltransferase 2 inhibitor. The first step of the pathway is the synthesis of nicotinyl-CoA from nicotinic acid by the nicotinic acid-CoA ligase pyr1. Nicotinyl-CoA is then a substrate of polyketide synthase pyr2 to produce 4-hydroxy-6-(3-pyridinyl)-2H-pyran-2-one (HPPO) which is further prenylated by the polyprenyl transferase pyr6 to yield farnesyl-HPPO. The next steps consist of an epoxidation of farnesyl-HPPO to epoxyfarnesyl-HPPO by FAD-dependent monooxygenase pyr5 and a cyclization of the terpenoid portion by the terpene cyclase pyr4 to yield deacetyl-pyripyropene E. The 2 cytochrome P450 monooxygenases pyr3 and pyr9, and the 2 acetyltransferases pyr7 and pyr8 are involved in the conversion of deacetyl-pyripyropene E into pyripyropene A through several cycles of oxidation and acetylation steps. Pyr7 acetylates deacetyl-pyripyropene E to pyripyropene E which is oxidized to 11-deacetyl-pyripyropene O by pyr3, which is in turn acetylated into pyripyropene O by pyr8. Pyripyropene O is then oxidized to deacetyl-pyripyropene A by pyr9. Deacetyl-pyripyropene A is finally acetylated to pyripyropene A by pyr8. In Aspergillus fumigatus (strain ATCC MYA-4609 / CBS 101355 / FGSC A1100 / Af293) (Neosartorya fumigata), this protein is Nicotinic acid-CoA ligase pyr1.